Consider the following 369-residue polypeptide: Tsukushi (369 aa).

The N-terminal stretch at 1–19 (MQFLAWFNMLLLLPCFSTT) is a signal peptide. The LRRNT domain maps to 20–60 (KTCFPGCHCEVESFGLFDSFSLTKVDCSGIGSHIVPVPIPL). LRR repeat units lie at residues 61 to 81 (DTSY…SMLT), 87 to 108 (TLVS…TFSR), 111 to 132 (YLES…CFSS), 134 to 155 (PLGD…VFAS), 161 to 181 (PLNV…HEKS), 184 to 205 (NIQN…QGIP), 206 to 226 (LRYL…DFKG), 229 to 248 (GLIH…SPYS), 254 to 276 (ALQV…VIFG), 279 to 300 (SIQE…VLKY), and 303 to 323 (SLKS…KEGQ). N-linked (GlcNAc...) asparagine glycosylation occurs at asparagine 76. Asparagine 189 is a glycosylation site (N-linked (GlcNAc...) asparagine). Asparagine 284 carries an N-linked (GlcNAc...) asparagine glycan.

As to quaternary structure, forms a ternary complex with chordin/CHRD and BMP4. Interacts with FZD4 (via FZ domain); competes with WNT2B for binding to FZD4, inhibiting Wnt signaling and repressing peripheral eye development. Interacts with BMP4; shows stronger interaction with BMP4 than isoform 2. Interacts with DVR1/VG1; the interaction is inhibited by BMP4. Interacts with BMP7. In terms of assembly, interacts with FZD4 (via FZ domain); competes with WNT2B for binding to FZD4, inhibiting Wnt signaling and repressing peripheral eye development. Interacts with BMP4; shows weaker interaction with BMP4 than isoform 1. Interacts with DVR1/VG1; the interaction is inhibited by BMP4. Interacts with BMP7. In terms of processing, N-glycosylated. In terms of tissue distribution, during embryonic development, expressed in the middle primitive streak and Hensen's node. Expressed in the peripheral region of the developing eye. Expressed in the presomitic mesoderm during somitogenesis in a NOTCH-dependent manner.

Its subcellular location is the secreted. Its function is as follows. Contributes to various developmental events through its interactions with multiple signaling pathways. Dorsalizing factor involved in the induction of Hensen's node by inhibiting bone morphogenetic proteins during gastrulation and by enhancing DVR1/VG1 activity. Wnt signaling inhibitor which competes with WNT2B for binding to Wnt receptor FZD4 and represses WNT2B-dependent development of the peripheral eye. In terms of biological role, shows strong bone morphogenetic protein antagonistic activity. Shows weak bone morphogenetic protein antagonistic activity. The protein is Tsukushi (TSKU) of Gallus gallus (Chicken).